A 446-amino-acid chain; its full sequence is Chromosomal replication initiator protein DnaA (446 aa).

The tract at residues 1-82 (MENILDLWNQ…ELSIKFVIPQ (82 aa)) is domain I, interacts with DnaA modulators. The segment at 83–103 (NQDVEDFMPKPQVKKAVKEDT) is domain II. The segment at 104–332 (SDFPQNMLNP…VAYSSLINKD (229 aa)) is domain III, AAA+ region. ATP-binding residues include glycine 154, leucine 155, glycine 156, lysine 157, and threonine 158. Mg(2+) is bound at residue threonine 158. The Initiator specific motif (ISM) signature appears at 182–206 (SEKFTNEFINSIRDNKAVDFRNRYR). Residues aspartate 214 and aspartate 215 each coordinate Mg(2+). The interval 333-346 (INADLAAEALKDII) is linker. Positions 347 to 446 (PSSKPKVITI…HVKEIKEQLK (100 aa)) are domain IV, binds dsDNA.

It belongs to the DnaA family. The DNA replisome assembles sequentially on oriC in this order; DnaA, DnaD, DnaB, DnaI-DnaC helicase. Oligomerizes as a right-handed, spiral filament on DNA at oriC. Forms an ATP-dependent helix on DNA at oriC; both DnaD and YabA inhibit formation of the DnaA helix. Forms an ATP-dependent oligomer, formation is stimulated by ds- and ssDNA; monomeric ADP-Soj inhibits oligomer formation. Interacts with DnaD. Interacts with YabA, and via YabA, with the replication machinery subunit beta sliding clamp DnaN. Interacts with YabA via domain IIIa (residues 109-275). Isolated domain I forms a 1:1 complex with SirA. Interacts with Soj, probably via domain III. Interacts via domains I and III with CcrZ. Interacts via domain IV with skin prophage-like element protein YqaH.

Its subcellular location is the cytoplasm. The protein resides in the nucleoid. It carries out the reaction ATP + H2O = ADP + phosphate + H(+). Its activity is regulated as follows. Oligomerization of DnaA can be controlled by Soj; monomeric ADP-Soj inhibits formation of the DnaA helix. YabA prevents the cooperative binding of DnaA-ATP to oriC-containing sequences; increased levels of DnaN (beta sliding clamp subunit of DNA polymerase) removes YabA from association with DnaA on the chromosome, enabling increased association of DnaA with its chromosomal binding sites. Both Soj and YabA chase DnaA from oriC site, YabA tethers DnaA to the DNA replication fork via the beta sliding clamp subunit DnaN. SirA antagonizes the ability of DnaA to bind to the replication origin, and thus decreases replication inititation during sporulation. Small protein YqaH, part of the skin prophage-like element, binds to DnaA and antagonizes its replication initiation and transcriptional regulation activities. Its function is as follows. Plays an essential role in the initiation and regulation of chromosomal replication. ATP-DnaA binds to the origin of replication (oriC) to initiate formation of the DNA replication initiation complex once per cell cycle. Binds directly to oriC at a 9 bp consensus (DnaA box): 5'-TTATCCACA-3' and separates the double-stranded (ds)DNA. Forms a right-handed helical filament on oriC DNA; dsDNA binds to the exterior of the filament while single-stranded (ss)DNA is stabilized in the filament's interior. The ATP-DnaA-oriC complex binds and stabilizes one strand of the AT-rich DNA unwinding element (DUE or basal unwinding system, BUS), permitting loading of DNA polymerase. Binds ATP with high affinity, ADP with lower affinity, but not AMP, cAMP or cGMP; ATP stimulates binding to DnaA boxes. Once bound promotes sequence-specific strand separation of DnaA-trios (3'-GAT-5' consensus) adjacent to oriC in the presence of ATP but not ADP. Domains III and IV are sufficient to separate dsDNA strands. The 'initiator specific motif' (ISM) of domain III contacts the middle adenine residue of the DnaA-trio probably stretching and stabilizing ssDNA. DnaA-trio recognition is co-operative and depends on DnaA self-assembly. The ssDNA serves as an assembly region for the replication machinery. Tethered to DnaN (beta sliding clamp subunit of DNA polymerase) and thus replication forks by YabA. During replication initiation DnaA-ATP binds cooperatively to sequences in oriC. YabA prevents this cooperative binding while still allowing DnaA to bind DNA. During the cell cycle an initial phase occurs in which DnaA is associated with origin regions, then the origin regions become spatially separate from the centrally sequestered DnaA molecules, and most DnaA molecules are unable to reassociate with origin regions. Does not require YabA to bind DNA. During sporulation SirA prevents DnaA association with the replication origin to prevent excessive chromosome replication. Overexpression induces the SOS response; increasing expression of downstream dnaN blocks this induction. Over-initiation of DNA replication is very deleterious; isolated suppressors in relA, ndrR, dnaC, cshA and crrZ increase replication elongation, decrease replication inititation or lead to a decrease in the replicative DNA helicase. Binds acidic phospholipids. Functionally, the half-life of ADP-DnaA is 1.5 minutes, of ATP-DnaA is 5 minutes at 37 degrees Celsius; in E.coli the half-life of ADP-DnaA is about 45 minutes. In terms of biological role, also acts as a transcriptional regulator. DnaA inhibits its own gene expression. DnaA binds specifically to the promoter regions of at least 20 operons (56 genes), including itself, sda and dnaB, and probably controls their expression in response to DNA replication inhibition. The protein is Chromosomal replication initiator protein DnaA of Bacillus subtilis (strain 168).